We begin with the raw amino-acid sequence, 212 residues long: Adenylate kinase (212 aa).

10-15 (GAGKGT) provides a ligand contact to ATP. Residues 30 to 59 (AIGDIFRTIIKTSTSEAELINNYVRQGELI) are NMP. Residues Arg-36, 57–59 (ELI), 85–88 (GYPR), and Gln-92 contribute to the AMP site. Residues 122-160 (GRYSCKNCGKIYNRYFLQPKTDNVCDVCGSSTFDYRKDD) form an LID region. Arg-123 serves as a coordination point for ATP. Positions 126 and 129 each coordinate Zn(2+). 132-133 (IY) serves as a coordination point for ATP. Zn(2+)-binding residues include Cys-146 and Cys-149. Positions 157 and 168 each coordinate AMP. An ATP-binding site is contributed by Lys-196.

This sequence belongs to the adenylate kinase family. In terms of assembly, monomer.

Its subcellular location is the cytoplasm. It carries out the reaction AMP + ATP = 2 ADP. Its pathway is purine metabolism; AMP biosynthesis via salvage pathway; AMP from ADP: step 1/1. Catalyzes the reversible transfer of the terminal phosphate group between ATP and AMP. Plays an important role in cellular energy homeostasis and in adenine nucleotide metabolism. This Rickettsia rickettsii (strain Iowa) protein is Adenylate kinase.